The following is an 87-amino-acid chain: Small ribosomal subunit protein uS15c (87 aa).

The protein belongs to the universal ribosomal protein uS15 family. As to quaternary structure, part of the 30S ribosomal subunit.

Its subcellular location is the plastid. It localises to the chloroplast. This Solanum lycopersicum (Tomato) protein is Small ribosomal subunit protein uS15c (rps15).